We begin with the raw amino-acid sequence, 151 residues long: Arginine repressor (151 aa).

This sequence belongs to the ArgR family.

The protein resides in the cytoplasm. It participates in amino-acid biosynthesis; L-arginine biosynthesis [regulation]. Regulates arginine biosynthesis genes. The protein is Arginine repressor of Pelotomaculum thermopropionicum (strain DSM 13744 / JCM 10971 / SI).